Consider the following 256-residue polypeptide: Trans-aconitate 2-methyltransferase (256 aa).

The protein belongs to the methyltransferase superfamily. Tam family.

It localises to the cytoplasm. It catalyses the reaction trans-aconitate + S-adenosyl-L-methionine = (E)-3-(methoxycarbonyl)pent-2-enedioate + S-adenosyl-L-homocysteine. In terms of biological role, catalyzes the S-adenosylmethionine monomethyl esterification of trans-aconitate. The polypeptide is Trans-aconitate 2-methyltransferase (Rhizobium etli (strain ATCC 51251 / DSM 11541 / JCM 21823 / NBRC 15573 / CFN 42)).